A 376-amino-acid polypeptide reads, in one-letter code: Queuine tRNA-ribosyltransferase (376 aa).

The active-site Proton acceptor is D89. Substrate is bound by residues 89-93, D143, Q187, and G214; that span reads DSGGF. The tract at residues 245–251 is RNA binding; the sequence is GVGKPQD. The active-site Nucleophile is D264. An RNA binding; important for wobble base 34 recognition region spans residues 269–273; the sequence is TRNAR. Residues C302, C304, C307, and H333 each contribute to the Zn(2+) site.

It belongs to the queuine tRNA-ribosyltransferase family. Homodimer. Within each dimer, one monomer is responsible for RNA recognition and catalysis, while the other monomer binds to the replacement base PreQ1. Zn(2+) is required as a cofactor.

The catalysed reaction is 7-aminomethyl-7-carbaguanine + guanosine(34) in tRNA = 7-aminomethyl-7-carbaguanosine(34) in tRNA + guanine. It functions in the pathway tRNA modification; tRNA-queuosine biosynthesis. Its function is as follows. Catalyzes the base-exchange of a guanine (G) residue with the queuine precursor 7-aminomethyl-7-deazaguanine (PreQ1) at position 34 (anticodon wobble position) in tRNAs with GU(N) anticodons (tRNA-Asp, -Asn, -His and -Tyr). Catalysis occurs through a double-displacement mechanism. The nucleophile active site attacks the C1' of nucleotide 34 to detach the guanine base from the RNA, forming a covalent enzyme-RNA intermediate. The proton acceptor active site deprotonates the incoming PreQ1, allowing a nucleophilic attack on the C1' of the ribose to form the product. After dissociation, two additional enzymatic reactions on the tRNA convert PreQ1 to queuine (Q), resulting in the hypermodified nucleoside queuosine (7-(((4,5-cis-dihydroxy-2-cyclopenten-1-yl)amino)methyl)-7-deazaguanosine). In Erwinia tasmaniensis (strain DSM 17950 / CFBP 7177 / CIP 109463 / NCPPB 4357 / Et1/99), this protein is Queuine tRNA-ribosyltransferase.